We begin with the raw amino-acid sequence, 702 residues long: Sodium/hydrogen exchanger 6 (702 aa).

12 helical membrane passes run 72–92 (SANL…IWLF), 104–124 (GLAM…IHVP), 177–197 (VTFD…FYAG), 212–232 (ILAY…SIMY), 253–273 (CLLF…AIFH), 279–299 (VELY…AIVL), 325–345 (IGIF…TGVV), 373–393 (TFLL…FCGI), 415–435 (FELL…LTLF), 437–457 (FQNH…IFLG), 480–500 (NFQH…ALAI), and 516–536 (LLIV…MLSC).

The protein belongs to the monovalent cation:proton antiporter 1 (CPA1) transporter (TC 2.A.36) family. As to quaternary structure, homodimer. Interacts with RACK1; regulates the distribution of SLC9A6 between endosomes and the plasma membrane. Ubiquitinated (in vitro). Post-translationally, glycosylated.

The protein localises to the endosome membrane. The protein resides in the recycling endosome membrane. It localises to the early endosome membrane. Its subcellular location is the late endosome membrane. It is found in the cell membrane. The catalysed reaction is Na(+)(in) + H(+)(out) = Na(+)(out) + H(+)(in). The enzyme catalyses K(+)(in) + H(+)(out) = K(+)(out) + H(+)(in). Functionally, endosomal Na(+), K(+)/H(+) antiporter. Mediates the electroneutral exchange of endosomal luminal H(+) for a cytosolic Na(+) or K(+). By facilitating proton efflux, SLC9A6 counteracts the acidity generated by vacuolar (V)-ATPase, thereby limiting luminal acidification. Responsible for alkalizing and maintaining the endosomal pH, and consequently in, e.g., endosome maturation and trafficking of recycling endosomal cargo. Plays a critical role during neurodevelopment by regulating synaptic development and plasticity. Implicated in the maintenance of cell polarity in a manner that is dependent on its ability to modulate intravesicular pH. Regulates intracelular pH in some specialized cells, osteoclasts and stereocilia where this transporter localizes to the plasma membrane. This chain is Sodium/hydrogen exchanger 6 (Slc9a6), found in Mus musculus (Mouse).